Reading from the N-terminus, the 196-residue chain is Ribosome maturation factor RimP (196 aa).

A disordered region spans residues 164–196 (LAPQKPNKPGPKKPGHDKKKPSNEPAAGKPRAE). The segment covering 173–182 (GPKKPGHDKK) has biased composition (basic residues).

This sequence belongs to the RimP family.

It localises to the cytoplasm. Required for maturation of 30S ribosomal subunits. In Xanthomonas campestris pv. campestris (strain 8004), this protein is Ribosome maturation factor RimP.